Reading from the N-terminus, the 333-residue chain is Protein farnesyltransferase/geranylgeranyltransferase type-1 subunit alpha (333 aa).

PFTA repeat units follow at residues 61–95 (LSSRALALTAEAIGLNAGNYTVWHFRRLLLESLKV), 96–130 (DLHVEREFVERVASGNSKNYQIWHHRRWVAEKLGP), 132–166 (ARNSELEFTKKILSVDAKHYHAWSHRQWVLQNLGG), 167–200 (WEDELSYCSELLAEDIFNNSAWNQRYFVITRSPV), and 207–241 (MRESEVLFTVEAIISYPENESSWRYLRGLFKDEST).

This sequence belongs to the protein prenyltransferase subunit alpha family. As to quaternary structure, heterodimer of FTA and FTB (farnesyltransferase). Heterodimer of an alpha and a beta subunit. Requires Mg(2+) as cofactor.

It catalyses the reaction L-cysteinyl-[protein] + (2E,6E)-farnesyl diphosphate = S-(2E,6E)-farnesyl-L-cysteinyl-[protein] + diphosphate. It carries out the reaction geranylgeranyl diphosphate + L-cysteinyl-[protein] = S-geranylgeranyl-L-cysteinyl-[protein] + diphosphate. Essential subunit of both the farnesyltransferase and the geranylgeranyltransferase complex. Contributes to the transfer of a farnesyl or geranylgeranyl moiety from farnesyl or geranylgeranyl diphosphate to a cysteine at the fourth position from the C-terminus of several proteins having the C-terminal sequence Cys-aliphatic-aliphatic-X. The sequence is that of Protein farnesyltransferase/geranylgeranyltransferase type-1 subunit alpha (FTA) from Pisum sativum (Garden pea).